The following is a 401-amino-acid chain: MATILLSSRLPTTGTATPSPTRPAPRFLSFPGTAIRRRGRGPLLASSAVSPPAPASAAQPYRALPASETTVLVTGATGYIGRYVVWELLRRGHRVLAVARSRSGIRGRNSPDDVVADLAPAQVVFSDVTDPAALLADLAPHGPVHAAVCCLASRGGGVQDSWRVDYRATLHTLQAARGLGAAHFVLLSAICVQKPLLEFQRAKLKFEEELAAEAARDPSFTYSVVRPTAFFKSLGGQVDIVKNGQPYVMFGDGKLCACKPISEEDLAAFIADCIYDQDKANKVLPIGGPGKALTPLEQGEMLFRLLGREPKFIKVPIQIMDAVIWVLDGLAKLFPGLEDAAEFGKIGRYYASESMLLLDPETGEYSDEKTPSYGKDTLEQFFQRVIREGMAGQELGEQTIF.

Residues Met1–Leu10 are compositionally biased toward polar residues. The disordered stretch occupies residues Met1–Arg26. The transit peptide at Met1 to Pro54 directs the protein to the chloroplast.

It localises to the plastid. It is found in the chloroplast. The enzyme catalyses protochlorophyllide a + NADP(+) = 3,8-divinyl protochlorophyllide a + NADPH + H(+). The protein operates within porphyrin-containing compound metabolism; chlorophyll biosynthesis. Catalyzes the conversion of divinyl chlorophyllide to monovinyl chlorophyllide. Reduces the 8-vinyl group of the tetrapyrrole to an ethyl group using NADPH as the reductant. Can use (3,8-divinyl)-chlorophyllide a (DV-Chlidea) &gt; (3,8-divinyl)-chlorophyll a (DV-Chla) &gt; (3,8-divinyl)-protochlorophyllide a (DV-Pchlidea) &gt; (3,8-divinyl)-magnesium-protoporphyrin IX monomethyl ester (DV-MPE) &gt; (3,8-divinyl)-magnesium-protoporphyrin IX (DV-Mg-Proto) as substrates. The sequence is that of Divinyl chlorophyllide a 8-vinyl-reductase, chloroplastic (DVR) from Zea mays (Maize).